The sequence spans 845 residues: G-type lectin S-receptor-like serine/threonine-protein kinase At1g11410 (845 aa).

A signal peptide spans 1–21; that stretch reads MKFFFIFFIFLFSFLIQSCYS. The Bulb-type lectin domain occupies 22 to 147; sequence DNTILRSQSL…VTGKSFWESF (126 aa). The Extracellular segment spans residues 22 to 441; it reads DNTILRSQSL…NGNGASGKKR (420 aa). Residues Asn82, Asn103, Asn185, Asn231, and Asn259 are each glycosylated (N-linked (GlcNAc...) asparagine). Positions 283–321 constitute an EGF-like domain; it reads PEDKCDIYNHCGFNGYCDSTSTEKFECSCLPGYEPKTPR. Cystine bridges form between Cys287–Cys299 and Cys293–Cys309. The 84-residue stretch at 341–424 folds into the PAN domain; that stretch reads CNGKEGFAKL…SGQDFYLRVD (84 aa). N-linked (GlcNAc...) asparagine glycans are attached at residues Asn357, Asn366, and Asn379. Cystine bridges form between Cys372–Cys399 and Cys376–Cys382. The chain crosses the membrane as a helical span at residues 442–462; that stretch reads LVLILISLIAVVMLLLISFHC. The Cytoplasmic portion of the chain corresponds to 463–845; the sequence is YLRKRRQRTQ…DVTLTDVQGR (383 aa). The region spanning 523–808 is the Protein kinase domain; the sequence is FAFQNKLGAG…DLPSPKHPAF (286 aa). ATP-binding positions include 529-537 and Lys551; that span reads LGAGGFGPV. The interval 612 to 629 is caM-binding; that stretch reads EQRAELDWPKRMGIIRGI. The Proton acceptor role is filled by Asp648. The segment at 803–845 is disordered; that stretch reads PKHPAFTAGRRRNTKTGGSSDNWPSGETSSTINDVTLTDVQGR. A compositionally biased stretch (polar residues) spans 817-845; it reads KTGGSSDNWPSGETSSTINDVTLTDVQGR.

The protein belongs to the protein kinase superfamily. Ser/Thr protein kinase family.

The protein localises to the cell membrane. It carries out the reaction L-seryl-[protein] + ATP = O-phospho-L-seryl-[protein] + ADP + H(+). The catalysed reaction is L-threonyl-[protein] + ATP = O-phospho-L-threonyl-[protein] + ADP + H(+). This is G-type lectin S-receptor-like serine/threonine-protein kinase At1g11410 from Arabidopsis thaliana (Mouse-ear cress).